Here is a 1820-residue protein sequence, read N- to C-terminus: Kinesin-like protein KIF20B (1820 aa).

One can recognise a Kinesin motor domain in the interval 58–479 (YLQVCLRIRP…LKFSAIAQKV (422 aa)). 152–159 (GLTNSGKT) contacts ATP. Serine 488 is modified (phosphoserine). 2 coiled-coil regions span residues 523–603 (ENSL…KIRE) and 674–793 (GFED…MENT). Threonine 560 bears the Phosphothreonine mark. The disordered stretch occupies residues 829–866 (SERKRVNENELQQDEPPAKKGSIHVSSAITEDQKKSEE). Serine 997 carries the post-translational modification Phosphoserine. The segment at 1050 to 1107 (ENSFHSSIEAIWEECKEIVKASSKKSHQIEELEQQIEKLQAEVKGYKDENNRLKEKEH) is necessary and sufficient for interaction with SHTN1. The segment covering 1247–1264 (EEEEETNRQETEKLKEEL) has biased composition (basic and acidic residues). A disordered region spans residues 1247–1275 (EEEEETNRQETEKLKEELSASSARTQNLK). The span at 1265–1274 (SASSARTQNL) shows a compositional bias: polar residues. The interaction with PIN1 stretch occupies residues 1560–1820 (IETQIMDIKP…KRRLRTKTAK (261 aa)). Serine 1588 is modified (phosphoserine). The residue at position 1644 (threonine 1644) is a Phosphothreonine; by CDK1. Serine 1658, serine 1715, and serine 1740 each carry phosphoserine. Positions 1760–1772 (LSNVEASKENVSQ) are enriched in polar residues. The segment at 1760 to 1781 (LSNVEASKENVSQPKRAKRKLY) is disordered.

The protein belongs to the TRAFAC class myosin-kinesin ATPase superfamily. Kinesin family. As to quaternary structure, oligomerizes (via kinesin motor domain). Associates with microtubules. Interacts (via C-terminal globular tail region) with PIN1 (via WW domain). Interacts with PRC1. Interacts with SHTN1 (via N-terminus); the interaction is direct and promotes the association of SHTN1 to microtubules in primary neurons. In terms of processing, phosphorylated during mitosis by CDK1. In terms of tissue distribution, brain, ovary, kidney and testis (at protein level). Overexpressed in bladder cancer cells (at protein level). Expressed in testis. Overexpressed in bladder cancer cells.

Its subcellular location is the nucleus. It is found in the cytoplasm. The protein resides in the cytoskeleton. The protein localises to the microtubule organizing center. It localises to the centrosome. Its subcellular location is the nucleolus. It is found in the nucleoplasm. The protein resides in the spindle. The protein localises to the spindle pole. It localises to the midbody. Its subcellular location is the cell projection. It is found in the axon. The protein resides in the growth cone. In terms of biological role, plus-end-directed motor enzyme that is required for completion of cytokinesis. Required for proper midbody organization and abscission in polarized cortical stem cells. Plays a role in the regulation of neuronal polarization by mediating the transport of specific cargos. Participates in the mobilization of SHTN1 and in the accumulation of PIP3 in the growth cone of primary hippocampal neurons in a tubulin and actin-dependent manner. In the developing telencephalon, cooperates with SHTN1 to promote both the transition from the multipolar to the bipolar stage and the radial migration of cortical neurons from the ventricular zone toward the superficial layer of the neocortex. Involved in cerebral cortex growth. Acts as an oncogene for promoting bladder cancer cells proliferation, apoptosis inhibition and carcinogenic progression. The chain is Kinesin-like protein KIF20B from Homo sapiens (Human).